We begin with the raw amino-acid sequence, 405 residues long: Threonine synthase (405 aa).

Lys106 carries the N6-(pyridoxal phosphate)lysine modification. Residues Asn132, 233–237 (GNAGN), and Thr371 each bind pyridoxal 5'-phosphate.

The protein belongs to the threonine synthase family. The cofactor is pyridoxal 5'-phosphate.

The enzyme catalyses O-phospho-L-homoserine + H2O = L-threonine + phosphate. It participates in amino-acid biosynthesis; L-threonine biosynthesis; L-threonine from L-aspartate: step 5/5. Its function is as follows. Catalyzes the gamma-elimination of phosphate from L-phosphohomoserine and the beta-addition of water to produce L-threonine. This is Threonine synthase (thrC) from Methanocaldococcus jannaschii (strain ATCC 43067 / DSM 2661 / JAL-1 / JCM 10045 / NBRC 100440) (Methanococcus jannaschii).